Consider the following 808-residue polypeptide: Tegument protein UL47 homolog (808 aa).

2 disordered regions span residues 1-21 (MQMPSMHRYGHPGQNQRRENQ) and 77-266 (PNEE…SFGE). The span at 83-92 (DNSRGRDRTR) shows a compositional bias: basic and acidic residues. Basic residues predominate over residues 133 to 160 (SRARSRRRSSSRRRHRNASMHMHFRGGS). Positions 162–171 (RSATGSQNLI) are enriched in polar residues. Positions 197 to 214 (RSSRVRRRHRRSSRRRGP) are enriched in basic residues. Over residues 235-259 (PISDIDQKRLRKNSDTSSRGTRESP) the composition is skewed to basic and acidic residues.

It belongs to the alphaherpesvirinae HHV-1 UL47 family. In terms of assembly, interacts with US3 kinase. Interacts with UL31 and UL34; these interactions seem important for efficient virion nuclear egress. Interacts with UL41/VHS. Phosphorylated by US3. This phosphorylation is required for proper nuclear localization. In terms of processing, O-glycosylated.

Its subcellular location is the virion tegument. It localises to the host nucleus. The protein localises to the host cytoplasm. Tegument protein that can bind to various RNA transcripts. Plays a role in the attenuation of selective viral and cellular mRNA degradation by modulating the activity of host shutoff RNase UL41/VHS. Also plays a role in the primary envelopment of virions in the perinuclear space, probably by interacting with two nuclear egress proteins UL31 and UL34. Plays an important role in the splicing of glycoprotein/gC transcripts and thereby participates in bird-to-bird viral transmission. The protein is Tegument protein UL47 homolog (MDV060) of Gallus gallus (Chicken).